Reading from the N-terminus, the 410-residue chain is Peptidase T (410 aa).

H79 contacts Zn(2+). The active site involves D81. Residue D142 participates in Zn(2+) binding. The active-site Proton acceptor is the E176. Zn(2+)-binding residues include E177, D199, and H381.

It belongs to the peptidase M20B family. Zn(2+) serves as cofactor.

It localises to the cytoplasm. The catalysed reaction is Release of the N-terminal residue from a tripeptide.. In terms of biological role, cleaves the N-terminal amino acid of tripeptides. The protein is Peptidase T of Bacillus cereus (strain G9842).